The sequence spans 913 residues: Auxilin (913 aa).

M1 bears the N-acetylmethionine mark. 3 repeat units span residues 36–39, 40–43, and 44–47. Positions 36–47 are 3 X 4 AA approximate tandem repeats; it reads NLKDNLKDTLKD. A Phosphatase tensin-type domain is found at 55–222; that stretch reads SVTSYTKGDL…GYMCDLLADK (168 aa). S112 is modified (phosphoserine). The active-site Phosphocysteine intermediate is C164. Residues 228–366 enclose the C2 tensin-type domain; sequence FKPLTIKSIT…FQVTLDVELQ (139 aa). An SH3-binding motif is present at residues 409 to 417; sequence PIDIPPDNP. Residues 451–776 are disordered; it reads QESEQSDDEL…GKGSSNLEGK (326 aa). Residues S453 and S456 each carry the phosphoserine modification. Residues 506–523 are compositionally biased toward polar residues; the sequence is AMSNSFSPPAAPPTNSEL. Residues 554–572 are compositionally biased toward low complexity; it reads ASTQSTPRRSATSTSASPT. 2 positions are modified to phosphoserine: S563 and S570. Over residues 599 to 629 the composition is skewed to polar residues; sequence FLNTSSASSDPFLQPTRSPSPTVHASSTPAV. Positions 654-669 are enriched in low complexity; it reads SAATSPTGSSHGTPTH. The 65-residue stretch at 849 to 913 folds into the J domain; it reads TKWKPVGMAD…FENQGQKPLY (65 aa).

As to quaternary structure, forms a complex composed of HSPA8, CLTC and DNAJC6. Interacts with HSPA8/HSC70 in an ATP-dependent manner; this interaction stimulates the HSPA8's ATPase activity. Interacts with CLTC; this interaction produces a local change in heavy-chain contacts, creating a detectable global distortion of the clathrin coat. Interacts with AP2A2. Interacts with DNM1(GTP-bound form); this interaction allows clathrin-coated vesicle (CCV) formation at the plasma membrane. Post-translationally, phosphorylation at Ser-570 modulates its ability to bind CLTC and therefore the synaptic vesicle endocytosis (SVE). In terms of processing, the N-terminus is blocked. Expressed in various brain regions, including cerebellum, corpus callosum, cortex, striatum, brainstem, pons, putamen, spinal cord and substantia nigra. Very low expression in non-neural tissues such as leukocytes, liver, adipose tissue, skeletal muscle and bone marrow.

The protein resides in the cytoplasmic vesicle. The protein localises to the clathrin-coated vesicle. Functionally, may act as a protein phosphatase and/or a lipid phosphatase. Co-chaperone that recruits HSPA8/HSC70 to clathrin-coated vesicles (CCVs) and promotes the ATP-dependent dissociation of clathrin from CCVs and participates in clathrin-mediated endocytosis of synaptic vesicles and their recycling and also in intracellular trafficking. Firstly, binds tightly to the clathrin cages, at a ratio of one DNAJC6 per clathrin triskelion. The HSPA8:ATP complex then binds to the clathrin-auxilin cage, initially at a ratio of one HSPA8 per triskelion leading to ATP hydrolysis stimulation and causing a conformational change in the HSPA8. This cycle is repeated three times to drive to a complex containing the clathrin-auxilin cage associated to three HSPA8:ADP complex. The ATP hydrolysis of the third HSPA8:ATP complex leads to a concerted dismantling of the cage into component triskelia. Then, dissociates from the released triskelia and be recycled to initiate another cycle of HSPA8's recruitment. Also acts during the early steps of clathrin-coated vesicle (CCV) formation through its interaction with the GTP bound form of DNM1. In Homo sapiens (Human), this protein is Auxilin.